The primary structure comprises 176 residues: Ribosome maturation factor RimM (176 aa).

Positions 93–168 (DDEVYIEDIL…TIRITPPPGL (76 aa)) constitute a PRC barrel domain.

The protein belongs to the RimM family. Binds ribosomal protein uS19.

It localises to the cytoplasm. Its function is as follows. An accessory protein needed during the final step in the assembly of 30S ribosomal subunit, possibly for assembly of the head region. Essential for efficient processing of 16S rRNA. May be needed both before and after RbfA during the maturation of 16S rRNA. It has affinity for free ribosomal 30S subunits but not for 70S ribosomes. This Oleidesulfovibrio alaskensis (strain ATCC BAA-1058 / DSM 17464 / G20) (Desulfovibrio alaskensis) protein is Ribosome maturation factor RimM.